The primary structure comprises 122 residues: MSKKIHEFNDIIRKLRKELFGKGPERIHTVFVENMAVSTLYGNLSASEQFIARTPEGREMVHAARTSLIQDLYSKQTPEGMEELMGAKLVHLFSDIKIEENIAVSVFVFDRKIDEQKEALQS.

This is an uncharacterized protein from Bacillus subtilis (strain 168).